The following is a 224-amino-acid chain: Cytidylate kinase (224 aa).

11 to 19 (GPAAAGKST) is a binding site for ATP.

It belongs to the cytidylate kinase family. Type 1 subfamily.

Its subcellular location is the cytoplasm. The catalysed reaction is CMP + ATP = CDP + ADP. It catalyses the reaction dCMP + ATP = dCDP + ADP. This is Cytidylate kinase from Listeria welshimeri serovar 6b (strain ATCC 35897 / DSM 20650 / CCUG 15529 / CIP 8149 / NCTC 11857 / SLCC 5334 / V8).